We begin with the raw amino-acid sequence, 77 residues long: uncharacterized protein (77 aa).

Basic and acidic residues-rich tracts occupy residues 1 to 24 (CPVA…EDQR) and 37 to 58 (EGPK…ERGP). The interval 1–77 (CPVAEEHFLV…RHGPKRKPAK (77 aa)) is disordered. Residues 66-77 (RPRHGPKRKPAK) are compositionally biased toward basic residues.

This is an uncharacterized protein from Macaca fascicularis (Crab-eating macaque).